A 163-amino-acid polypeptide reads, in one-letter code: Cyclic pyranopterin monophosphate synthase (163 aa).

Residues 75–77 (MCH) and 113–114 (ME) each bind substrate. Residue Asp-128 is part of the active site.

This sequence belongs to the MoaC family. In terms of assembly, homohexamer; trimer of dimers.

The catalysed reaction is (8S)-3',8-cyclo-7,8-dihydroguanosine 5'-triphosphate = cyclic pyranopterin phosphate + diphosphate. It functions in the pathway cofactor biosynthesis; molybdopterin biosynthesis. Catalyzes the conversion of (8S)-3',8-cyclo-7,8-dihydroguanosine 5'-triphosphate to cyclic pyranopterin monophosphate (cPMP). This Desulforapulum autotrophicum (strain ATCC 43914 / DSM 3382 / VKM B-1955 / HRM2) (Desulfobacterium autotrophicum) protein is Cyclic pyranopterin monophosphate synthase.